We begin with the raw amino-acid sequence, 280 residues long: Dihydropteroate synthase (280 aa).

One can recognise a Pterin-binding domain in the interval 1-265 (MSPAPVQVMG…DVRASVDAIK (265 aa)). Asn-13 is a binding site for Mg(2+). Residues Asp-86, Asn-105, Asp-177, Lys-213, and 253–255 (RVH) contribute to the (7,8-dihydropterin-6-yl)methyl diphosphate site.

This sequence belongs to the DHPS family. In terms of assembly, homodimer. Mg(2+) is required as a cofactor.

It carries out the reaction (7,8-dihydropterin-6-yl)methyl diphosphate + 4-aminobenzoate = 7,8-dihydropteroate + diphosphate. It participates in cofactor biosynthesis; tetrahydrofolate biosynthesis; 7,8-dihydrofolate from 2-amino-4-hydroxy-6-hydroxymethyl-7,8-dihydropteridine diphosphate and 4-aminobenzoate: step 1/2. Functionally, catalyzes the condensation of para-aminobenzoate (pABA) with 6-hydroxymethyl-7,8-dihydropterin diphosphate (DHPt-PP) to form 7,8-dihydropteroate (H2Pte), the immediate precursor of folate derivatives. The chain is Dihydropteroate synthase (folP1) from Mycobacterium bovis (strain ATCC BAA-935 / AF2122/97).